We begin with the raw amino-acid sequence, 356 residues long: Dual-specificity RNA methyltransferase RlmN (356 aa).

Glutamate 92 serves as the catalytic Proton acceptor. Positions 98-334 (EKDRGTLCIS…MRRTRGEDID (237 aa)) constitute a Radical SAM core domain. Cysteine 105 and cysteine 337 are joined by a disulfide. Positions 112, 116, and 119 each coordinate [4Fe-4S] cluster. S-adenosyl-L-methionine contacts are provided by residues 162–163 (GE), serine 194, 216–218 (SLH), and asparagine 294. The active-site S-methylcysteine intermediate is the cysteine 337.

The protein belongs to the radical SAM superfamily. RlmN family. It depends on [4Fe-4S] cluster as a cofactor.

Its subcellular location is the cytoplasm. It catalyses the reaction adenosine(2503) in 23S rRNA + 2 reduced [2Fe-2S]-[ferredoxin] + 2 S-adenosyl-L-methionine = 2-methyladenosine(2503) in 23S rRNA + 5'-deoxyadenosine + L-methionine + 2 oxidized [2Fe-2S]-[ferredoxin] + S-adenosyl-L-homocysteine. It carries out the reaction adenosine(37) in tRNA + 2 reduced [2Fe-2S]-[ferredoxin] + 2 S-adenosyl-L-methionine = 2-methyladenosine(37) in tRNA + 5'-deoxyadenosine + L-methionine + 2 oxidized [2Fe-2S]-[ferredoxin] + S-adenosyl-L-homocysteine. Specifically methylates position 2 of adenine 2503 in 23S rRNA and position 2 of adenine 37 in tRNAs. m2A2503 modification seems to play a crucial role in the proofreading step occurring at the peptidyl transferase center and thus would serve to optimize ribosomal fidelity. The chain is Dual-specificity RNA methyltransferase RlmN from Vesicomyosocius okutanii subsp. Calyptogena okutanii (strain HA).